Here is a 230-residue protein sequence, read N- to C-terminus: Cytidylate kinase (230 aa).

Position 12 to 20 (12 to 20 (GPSGTGKST)) interacts with ATP.

The protein belongs to the cytidylate kinase family. Type 1 subfamily.

The protein localises to the cytoplasm. It catalyses the reaction CMP + ATP = CDP + ADP. The enzyme catalyses dCMP + ATP = dCDP + ADP. The polypeptide is Cytidylate kinase (Corynebacterium efficiens (strain DSM 44549 / YS-314 / AJ 12310 / JCM 11189 / NBRC 100395)).